The following is a 198-amino-acid chain: Beta-crystallin A1 (198 aa).

The segment at 1–13 is N-terminal arm; that stretch reads MAQINPLPVPLGP. 2 Beta/gamma crystallin 'Greek key' domains span residues 14-53 and 54-100; these read WKIT…KVEC and GGWI…RPIC. A connecting peptide region spans residues 101–106; that stretch reads SANHKE. Beta/gamma crystallin 'Greek key' domains are found at residues 107–148 and 149–197; these read SKLV…KVQC and GSWV…RRIQ.

It belongs to the beta/gamma-crystallin family. As to quaternary structure, homo/heterodimer, or complexes of higher-order. The structure of beta-crystallin oligomers seems to be stabilized through interactions between the N-terminal arms.

Crystallins are the dominant structural components of the vertebrate eye lens. This chain is Beta-crystallin A1, found in Rana temporaria (European common frog).